A 455-amino-acid polypeptide reads, in one-letter code: MVEQGDAAPLLRWAEGPAVSVPQDPALQAGGWVRGGSGEGRVAAEAPRRREPDEPAPPEVLLQPGRLELGDVEEDQVVAVFVVTFDPRSGNMVEWCLPQDIDLEGVEFKSMASGSHKVQSDFIYFRKGPFFGLACFANMPVESELERGARMKSVGILSPSYTLLYRYMHFLENQVRHQLEMPGHYSHLAAFYEDKKGVLHAGPGRGGSLPPVYWLPSIHRYMYPEMKITHPAGCMSQFIKFFGEQILILWKFALLRKRILIFSPPPVGVVCYRVYCCCCLANVSLPGIGGTIPESKPFFYVNVADIESLEVEVSYVACTTEKIFEEKRELYDVYVDNQNVKTHHDHLQPLLKINSADREKYRRLNEQRQMLLYSQEVEGDYSPCEEDLFVLFFLEQNNRIFQTLLEVSASQDKTLTAEHARGMGLDPQGDRSFLMDLLEAYGIDVMLVIDNPCCP.

The tract at residues 1–59 (MVEQGDAAPLLRWAEGPAVSVPQDPALQAGGWVRGGSGEGRVAAEAPRRREPDEPAPPE) is disordered. The residue at position 2 (V2) is an N-acetylvaline. One can recognise a uDENN domain in the interval 15–187 (EGPAVSVPQD…QLEMPGHYSH (173 aa)). Residue R41 is modified to Omega-N-methylarginine. In terms of domain architecture, cDENN spans 214–362 (WLPSIHRYMY…INSADREKYR (149 aa)). The dDENN domain maps to 364–455 (LNEQRQMLLY…MLVIDNPCCP (92 aa)).

This sequence belongs to the DENND11 family.

Its function is as follows. Probable guanine nucleotide exchange factor (GEF). May promote the exchange of GDP to GTP, converting inactive GDP-bound small GTPases into their active GTP-bound form. May play a role in neuritogenesis, as well as in neuronal recovery and/or restructuring in the hippocampus following transient cerebral ischemia. This Mus musculus (Mouse) protein is DENN domain-containing protein 11 (Dennd11).